The chain runs to 199 residues: Chaperone protein TorD (199 aa).

Belongs to the TorD/DmsD family. TorD subfamily.

It localises to the cytoplasm. Its function is as follows. Involved in the biogenesis of TorA. Acts on TorA before the insertion of the molybdenum cofactor and, as a result, probably favors a conformation of the apoenzyme that is competent for acquiring the cofactor. In Escherichia coli O6:H1 (strain CFT073 / ATCC 700928 / UPEC), this protein is Chaperone protein TorD.